Consider the following 171-residue polypeptide: Ribosome maturation factor RimM (171 aa).

The region spanning 97–169 (DGEFYYHEII…RVDVDIMEGL (73 aa)) is the PRC barrel domain.

The protein belongs to the RimM family. Binds ribosomal protein uS19.

The protein resides in the cytoplasm. Functionally, an accessory protein needed during the final step in the assembly of 30S ribosomal subunit, possibly for assembly of the head region. Essential for efficient processing of 16S rRNA. May be needed both before and after RbfA during the maturation of 16S rRNA. It has affinity for free ribosomal 30S subunits but not for 70S ribosomes. In Lactococcus lactis subsp. cremoris (strain SK11), this protein is Ribosome maturation factor RimM.